The chain runs to 193 residues: ATP-dependent Clp protease proteolytic subunit (193 aa).

Residue Ser98 is the Nucleophile of the active site. His123 is an active-site residue.

The protein belongs to the peptidase S14 family. Fourteen ClpP subunits assemble into 2 heptameric rings which stack back to back to give a disk-like structure with a central cavity, resembling the structure of eukaryotic proteasomes.

It is found in the cytoplasm. It carries out the reaction Hydrolysis of proteins to small peptides in the presence of ATP and magnesium. alpha-casein is the usual test substrate. In the absence of ATP, only oligopeptides shorter than five residues are hydrolyzed (such as succinyl-Leu-Tyr-|-NHMec, and Leu-Tyr-Leu-|-Tyr-Trp, in which cleavage of the -Tyr-|-Leu- and -Tyr-|-Trp bonds also occurs).. Functionally, cleaves peptides in various proteins in a process that requires ATP hydrolysis. Has a chymotrypsin-like activity. Plays a major role in the degradation of misfolded proteins. ClpXP is involved in the complete degradation of the Site-2 clipped anti-sigma-W factor RsiW. This results in the release of SigW and the transcription activation of the genes under the control of the sigma-W factor. The sequence is that of ATP-dependent Clp protease proteolytic subunit from Oceanobacillus iheyensis (strain DSM 14371 / CIP 107618 / JCM 11309 / KCTC 3954 / HTE831).